Consider the following 465-residue polypeptide: Antithrombin-III (465 aa).

The signal sequence occupies residues Met1–Cys32. 2 disulfides stabilise this stretch: Cys41–Cys161 and Cys54–Cys128. Thr64 carries the phosphothreonine modification. Ser69 carries the phosphoserine modification. Trp82 contributes to the heparin binding site. N-linked (GlcNAc...) asparagine glycosylation occurs at Asn129. Residue Arg162 coordinates heparin. Asn168 carries N-linked (GlcNAc...) asparagine glycosylation. Arg178 contributes to the heparin binding site. 2 N-linked (GlcNAc...) asparagine glycosylation sites follow: Asn188 and Asn225. Cysteines 280 and 463 form a disulfide.

It belongs to the serpin family. In terms of assembly, forms protease inhibiting heterodimer with TMPRSS7. Phosphorylated by FAM20C in the extracellular medium. Plasma.

The protein resides in the secreted. Its subcellular location is the extracellular space. Most important serine protease inhibitor in plasma that regulates the blood coagulation cascade. AT-III inhibits thrombin, matriptase-3/TMPRSS7, as well as factors IXa, Xa and XIa. Its inhibitory activity is greatly enhanced in the presence of heparin. This Ovis aries (Sheep) protein is Antithrombin-III (SERPINC1).